We begin with the raw amino-acid sequence, 57 residues long: uncharacterized protein (57 aa).

This is an uncharacterized protein from Thermoproteus tenax virus 1 (strain KRA1) (TTV1).